We begin with the raw amino-acid sequence, 625 residues long: Phosphomethylpyrimidine synthase (625 aa).

Residues N230, M259, Y288, H324, 344–346 (SRG), 385–388 (DGLR), and E424 each bind substrate. Residue H428 participates in Zn(2+) binding. Y451 lines the substrate pocket. H492 contributes to the Zn(2+) binding site. Residues C572, C575, and C580 each coordinate [4Fe-4S] cluster.

This sequence belongs to the ThiC family. Homodimer. [4Fe-4S] cluster serves as cofactor.

It carries out the reaction 5-amino-1-(5-phospho-beta-D-ribosyl)imidazole + S-adenosyl-L-methionine = 4-amino-2-methyl-5-(phosphooxymethyl)pyrimidine + CO + 5'-deoxyadenosine + formate + L-methionine + 3 H(+). The protein operates within cofactor biosynthesis; thiamine diphosphate biosynthesis. Catalyzes the synthesis of the hydroxymethylpyrimidine phosphate (HMP-P) moiety of thiamine from aminoimidazole ribotide (AIR) in a radical S-adenosyl-L-methionine (SAM)-dependent reaction. This chain is Phosphomethylpyrimidine synthase, found in Xanthomonas campestris pv. campestris (strain 8004).